The chain runs to 260 residues: Phosphatidylglycerol--prolipoprotein diacylglyceryl transferase (260 aa).

3 helical membrane passes run 16–36 (LEFR…YFIV), 55–75 (VIFS…ILFY), and 87–107 (LFAV…VILA). R138 provides a ligand contact to a 1,2-diacyl-sn-glycero-3-phospho-(1'-sn-glycerol). 2 helical membrane passes run 198-218 (GVVF…VEFF) and 232-252 (FSMG…MAVL).

The protein belongs to the Lgt family.

Its subcellular location is the cell inner membrane. The catalysed reaction is L-cysteinyl-[prolipoprotein] + a 1,2-diacyl-sn-glycero-3-phospho-(1'-sn-glycerol) = an S-1,2-diacyl-sn-glyceryl-L-cysteinyl-[prolipoprotein] + sn-glycerol 1-phosphate + H(+). Its pathway is protein modification; lipoprotein biosynthesis (diacylglyceryl transfer). Its function is as follows. Catalyzes the transfer of the diacylglyceryl group from phosphatidylglycerol to the sulfhydryl group of the N-terminal cysteine of a prolipoprotein, the first step in the formation of mature lipoproteins. This chain is Phosphatidylglycerol--prolipoprotein diacylglyceryl transferase, found in Geobacter sulfurreducens (strain ATCC 51573 / DSM 12127 / PCA).